The chain runs to 167 residues: Small ribosomal subunit protein uS5 (167 aa).

Residues 12–75 (LQEKLVQVNR…EAARRNMIQV (64 aa)) form the S5 DRBM domain.

This sequence belongs to the universal ribosomal protein uS5 family. Part of the 30S ribosomal subunit. Contacts proteins S4 and S8.

In terms of biological role, with S4 and S12 plays an important role in translational accuracy. Its function is as follows. Located at the back of the 30S subunit body where it stabilizes the conformation of the head with respect to the body. This Alcanivorax borkumensis (strain ATCC 700651 / DSM 11573 / NCIMB 13689 / SK2) protein is Small ribosomal subunit protein uS5.